Reading from the N-terminus, the 252-residue chain is Triosephosphate isomerase (252 aa).

A substrate-binding site is contributed by 10 to 12; it reads NWK. Histidine 96 acts as the Electrophile in catalysis. Glutamate 168 (proton acceptor) is an active-site residue. Substrate contacts are provided by residues glycine 174, serine 213, and 234–235; that span reads GG.

This sequence belongs to the triosephosphate isomerase family. In terms of assembly, homodimer.

It localises to the cytoplasm. It catalyses the reaction D-glyceraldehyde 3-phosphate = dihydroxyacetone phosphate. It functions in the pathway carbohydrate biosynthesis; gluconeogenesis. The protein operates within carbohydrate degradation; glycolysis; D-glyceraldehyde 3-phosphate from glycerone phosphate: step 1/1. In terms of biological role, involved in the gluconeogenesis. Catalyzes stereospecifically the conversion of dihydroxyacetone phosphate (DHAP) to D-glyceraldehyde-3-phosphate (G3P). This chain is Triosephosphate isomerase, found in Nitrosomonas eutropha (strain DSM 101675 / C91 / Nm57).